A 239-amino-acid polypeptide reads, in one-letter code: Lactate utilization protein A 1 (239 aa).

Belongs to the LutA/YkgE family.

Is involved in L-lactate degradation and allows cells to grow with lactate as the sole carbon source. This Bacillus anthracis (strain A0248) protein is Lactate utilization protein A 1.